Here is a 71-residue protein sequence, read N- to C-terminus: Long neurotoxin Tx-NM3-1 (71 aa).

5 disulfides stabilise this stretch: Cys3–Cys20, Cys14–Cys41, Cys26–Cys30, Cys45–Cys56, and Cys57–Cys62.

In terms of tissue distribution, expressed by the venom gland.

The protein localises to the secreted. Binds with high affinity to muscular (alpha-1-beta-1-gamma-delta/CHRNA1-CHRNB1-CHRNG-CHRND) and neuronal (alpha-7/CHRNA7) nicotinic acetylcholine receptor (nAChR) and inhibits acetylcholine from binding to the receptor, thereby impairing neuromuscular and neuronal transmission. Ranges of nAChR inhibition are in nanomolar (competitive binding with alpha-bungarotoxin gives Ki=1.66 nM on muscle nAChR and Ki=4.84 nM on alpha-7). Also shows moderate inhibition on GABA(A) alpha-1-beta-3-gamma-2 receptor (GABRA1-GABRB3-GABRG2) (IC(50)=0.68 uM), and a lower inhibition on alpha-1-beta-2-gamma-2 (GABRA1-GABRB2-GABRG2) and alpha-3-beta-2-gamma-2 (GABRA3-GABRB2-GABRG2). This chain is Long neurotoxin Tx-NM3-1, found in Naja melanoleuca (Forest cobra).